A 535-amino-acid chain; its full sequence is Beta-amylase (535 aa).

Positions methionine 1 to glutamate 2 are cleaved as a propeptide — removed in mature form. An N-acetylvaline modification is found at valine 3. 3 residues coordinate substrate: aspartate 51, histidine 91, and aspartate 99. Catalysis depends on glutamate 184, which acts as the Proton donor. Lysine 293, histidine 298, and threonine 340 together coordinate substrate. Residue glutamate 378 is the Proton acceptor of the active site. Substrate-binding positions include asparagine 379–alanine 380 and arginine 418. 3 repeat units span residues glycine 489–glutamate 499, glycine 500–lysine 510, and glycine 511–glutamate 521. The segment at glycine 489–proline 532 is 4 X 11 AA tandem repeats. Residues proline 490 to methionine 535 constitute a propeptide, removed in mature form. The interval threonine 513–methionine 535 is disordered. The stretch at aspartate 522–proline 532 is one 4; approximate repeat.

Belongs to the glycosyl hydrolase 14 family. In terms of assembly, monomer. In terms of tissue distribution, endosperm.

It catalyses the reaction Hydrolysis of (1-&gt;4)-alpha-D-glucosidic linkages in polysaccharides so as to remove successive maltose units from the non-reducing ends of the chains.. Functionally, catalyzes the liberation of maltose from 1,4-alpha-D glucans. This is Beta-amylase from Hordeum vulgare subsp. spontaneum (Wild barley).